A 369-amino-acid chain; its full sequence is 4-hydroxy-3-methylbut-2-en-1-yl diphosphate synthase (flavodoxin) (369 aa).

[4Fe-4S] cluster is bound by residues Cys-270, Cys-273, Cys-305, and Glu-312.

The protein belongs to the IspG family. [4Fe-4S] cluster serves as cofactor.

It carries out the reaction (2E)-4-hydroxy-3-methylbut-2-enyl diphosphate + oxidized [flavodoxin] + H2O + 2 H(+) = 2-C-methyl-D-erythritol 2,4-cyclic diphosphate + reduced [flavodoxin]. It participates in isoprenoid biosynthesis; isopentenyl diphosphate biosynthesis via DXP pathway; isopentenyl diphosphate from 1-deoxy-D-xylulose 5-phosphate: step 5/6. Its function is as follows. Converts 2C-methyl-D-erythritol 2,4-cyclodiphosphate (ME-2,4cPP) into 1-hydroxy-2-methyl-2-(E)-butenyl 4-diphosphate. The protein is 4-hydroxy-3-methylbut-2-en-1-yl diphosphate synthase (flavodoxin) of Pseudomonas putida (strain ATCC 47054 / DSM 6125 / CFBP 8728 / NCIMB 11950 / KT2440).